Consider the following 252-residue polypeptide: Major prion protein (252 aa).

The signal sequence occupies residues 1-22 (MANLGCWMLVLFVATWSDLGLC). The segment at 23-38 (KKRPKPGGWNTGGSRY) is interaction with ADGRG6. Residues 23–229 (KKRPKPGGWN…ESQAYYQRGS (207 aa)) are interaction with GRB2, ERI3 and SYN1. Residues 26–106 (PKPGGWNTGG…QWNKPSKPKT (81 aa)) form a disordered region. 5 repeat units span residues 51–58 (PQGGGWGQ), 59–66 (PHGGGWGQ), 67–74 (PHGGGWGQ), 75–82 (PHGGSWGQ), and 83–90 (PHGGGWGQ). Residues 51-90 (PQGGGWGQPHGGGWGQPHGGGWGQPHGGSWGQPHGGGWGQ) form a 5 X 8 AA tandem repeats of P-H-G-G-G-W-G-Q region. Residues 52 to 94 (QGGGWGQPHGGGWGQPHGGGWGQPHGGSWGQPHGGGWGQGGGT) show a composition bias toward gly residues. The Cu(2+) site is built by histidine 60, glycine 61, glycine 62, histidine 68, glycine 69, glycine 70, histidine 76, glycine 77, glycine 78, histidine 84, glycine 85, and glycine 86. Cysteine 178 and cysteine 213 form a disulfide bridge. 2 N-linked (GlcNAc...) asparagine glycosylation sites follow: asparagine 180 and asparagine 196. Residue serine 229 is the site of GPI-anchor amidated serine attachment. Positions 230–252 (SMVLFSSPPVILLISFLIFLIVG) are cleaved as a propeptide — removed in mature form.

This sequence belongs to the prion family. In terms of assembly, monomer and homodimer. Has a tendency to aggregate into amyloid fibrils containing a cross-beta spine, formed by a steric zipper of superposed beta-strands. Soluble oligomers may represent an intermediate stage on the path to fibril formation. Copper binding may promote oligomerization. Interacts with GRB2, APP, ERI3/PRNPIP and SYN1. Mislocalized cytosolically exposed PrP interacts with MGRN1; this interaction alters MGRN1 subcellular location and causes lysosomal enlargement. Interacts with APP. Interacts with KIAA1191. Interacts with ADGRG6.

It localises to the cell membrane. Its subcellular location is the golgi apparatus. Its function is as follows. Its primary physiological function is unclear. May play a role in neuronal development and synaptic plasticity. May be required for neuronal myelin sheath maintenance. May promote myelin homeostasis through acting as an agonist for ADGRG6 receptor. May play a role in iron uptake and iron homeostasis. Soluble oligomers are toxic to cultured neuroblastoma cells and induce apoptosis (in vitro). Association with GPC1 (via its heparan sulfate chains) targets PRNP to lipid rafts. Also provides Cu(2+) or Zn(2+) for the ascorbate-mediated GPC1 deaminase degradation of its heparan sulfate side chains. The polypeptide is Major prion protein (PRNP) (Sapajus apella (Brown-capped capuchin)).